The following is a 142-amino-acid chain: Hemoglobin subunit alpha (142 aa).

An N-acetylserine modification is found at Ser-1. The Globin domain maps to 1–142 (SLSDKDKAAV…LSLALAEKYR (142 aa)). Residues His-59 and His-88 each contribute to the heme b site.

It belongs to the globin family. In terms of assembly, heterotetramer of two alpha chains and two beta chains. Red blood cells.

In terms of biological role, involved in oxygen transport from gills to the various peripheral tissues. The polypeptide is Hemoglobin subunit alpha (Lycodes reticulatus (Arctic eelpout)).